Consider the following 157-residue polypeptide: MALPEENPVYGPFFGVMGAAAAIIFSALGAAYGTAKSGTGIAAMSVMRPELIMKSIIPVVMAGIIAIYGLVVAVLIAGSLDTPTKYSLYKGFIHLGAGLAVGFSGLAAGFAIGIVGDAGVRGTAQQPRLFVGMILILIFAEVLGLYGLIVAIYLYTK.

Residues M1–Y10 are Lumenal-facing. The chain crosses the membrane as a helical span at residues G11–G33. At T34–S55 the chain is on the cytoplasmic side. Residues I56 to I76 form a helical membrane-spanning segment. Residues A77 to H94 lie on the Lumenal side of the membrane. A helical transmembrane segment spans residues L95–G116. The Cytoplasmic segment spans residues D117–R128. The chain crosses the membrane as a helical span at residues L129–L154. The Lumenal portion of the chain corresponds to Y155–K157.

Belongs to the V-ATPase proteolipid subunit family. In terms of assembly, V-ATPase is a heteromultimeric enzyme made up of two complexes: the ATP-hydrolytic V1 complex and the proton translocation V0 complex. The V1 complex consists of three catalytic AB heterodimers that form a heterohexamer, three peripheral stalks each consisting of EG heterodimers, one central rotor including subunits D and F, and the regulatory subunits C and H. The proton translocation complex V0 consists of the proton transport subunit a, a ring of proteolipid subunits c9c'', rotary subunit d, subunits e and f, and the accessory subunits VhaAC45 and ATP6AP2.

The protein resides in the membrane. Proton-conducting pore forming subunit of the V0 complex of vacuolar(H+)-ATPase (V-ATPase), a multisubunit enzyme composed of a peripheral complex (V1) that hydrolyzes ATP and a membrane integral complex (V0) that translocates protons. V-ATPase is responsible for acidifying and maintaining the pH of intracellular compartments and in some cell types, is targeted to the plasma membrane, where it is responsible for acidifying the extracellular environment. This chain is V-type proton ATPase 16 kDa proteolipid subunit c, found in Aedes aegypti (Yellowfever mosquito).